The chain runs to 415 residues: Esterase FrsA (415 aa).

The protein belongs to the FrsA family. Monomer in solution. Homodimer. Forms a 1:1 complex with the unphosphorylated form of the EIIA component of the glucose-specific PTS system (IIAGlc).

It carries out the reaction a carboxylic ester + H2O = an alcohol + a carboxylate + H(+). Its function is as follows. Catalyzes the hydrolysis of esters. In vitro, prefers short chain alkanoate ester as substrate. Displays highest activity towards p-nitrophenyl acetate (pNPA). Has weaker activity towards p-nitrophenyl butyrate (pNPB). This is Esterase FrsA from Vibrio vulnificus (strain CMCP6).